An 84-amino-acid chain; its full sequence is uncharacterized protein (84 aa).

The tract at residues 62-84 (GYATKKDTMRMSAQKRTTKRLKP) is disordered.

This is an uncharacterized protein from Soybean chlorotic mottle virus.